Consider the following 102-residue polypeptide: Large ribosomal subunit protein P1 (102 aa).

The segment at 69–91 (APAAAAEEKKEEEKKEEKKEEDT) is disordered. A compositionally biased stretch (basic and acidic residues) spans 74 to 90 (AEEKKEEEKKEEKKEED).

This sequence belongs to the eukaryotic ribosomal protein P1/P2 family. Part of the 50S ribosomal subunit. Homodimer, it forms part of the ribosomal stalk which helps the ribosome interact with GTP-bound translation factors. Forms a heptameric uL10/P0(P1)2(P1)2(P1)2 complex, where uL10/P0 forms an elongated spine to which the P1 dimers bind in a sequential fashion.

In terms of biological role, forms part of the ribosomal stalk, playing a central role in the interaction of the ribosome with GTP-bound translation factors. This Methanocaldococcus jannaschii (strain ATCC 43067 / DSM 2661 / JAL-1 / JCM 10045 / NBRC 100440) (Methanococcus jannaschii) protein is Large ribosomal subunit protein P1.